Here is a 183-residue protein sequence, read N- to C-terminus: ATP synthase subunit b, chloroplastic (183 aa).

Residues 25-45 traverse the membrane as a helical segment; it reads DILATNLINLTVVVGVLIFFG.

The protein belongs to the ATPase B chain family. As to quaternary structure, F-type ATPases have 2 components, F(1) - the catalytic core - and F(0) - the membrane proton channel. F(1) has five subunits: alpha(3), beta(3), gamma(1), delta(1), epsilon(1). F(0) has four main subunits: a(1), b(1), b'(1) and c(10-14). The alpha and beta chains form an alternating ring which encloses part of the gamma chain. F(1) is attached to F(0) by a central stalk formed by the gamma and epsilon chains, while a peripheral stalk is formed by the delta, b and b' chains.

The protein resides in the plastid. It localises to the chloroplast thylakoid membrane. Functionally, f(1)F(0) ATP synthase produces ATP from ADP in the presence of a proton or sodium gradient. F-type ATPases consist of two structural domains, F(1) containing the extramembraneous catalytic core and F(0) containing the membrane proton channel, linked together by a central stalk and a peripheral stalk. During catalysis, ATP synthesis in the catalytic domain of F(1) is coupled via a rotary mechanism of the central stalk subunits to proton translocation. In terms of biological role, component of the F(0) channel, it forms part of the peripheral stalk, linking F(1) to F(0). In Saccharum hybrid (Sugarcane), this protein is ATP synthase subunit b, chloroplastic.